The sequence spans 583 residues: MGRPRTARVFMNVRVTTMDAELEFAIQQSTTGKQLFDQVVKTIGLREVWFFGLQYTDSKGDLTWIKLYKKVMSQDVQKGDPLQFKFRAKFYPEDVAEELIQDITLRLFYLQVKNAILSDEIYCPPETSVLLASYAVQARHGDYNKTTHVPGFLVNDRLLPQRVIDQHKMSKDEWENSITTWWQEHRGMLREDAMMEYLKIAQDLEMYGVNYFEIRNKKGTELWLGVDALGLNIYEKDDRLTPKIGFPWSEIRNISFNDRKFIIKPIDKKAPDFVFFAPRVRINKRILALCMGNHELYMRRRKPDTIDVQQMKAQAREEKNAKQQEREKLQLALAARERAEKKQQEYEDRLRTMQEEMERSQANLIEAQEMIRRLEDQLKQLQFAKDELEARQNELQVMIKRLEESKNMEVAERQKLEDEIRAKQEEVQKIQEEVSVKDTETKRLQEEVEEARRKQNEAAAALLAATTTPNHHHVDEEEEDNEEELTNGAENGTSRDYSKDFDTDEHIKDPVEERRTLAERNERLHDQLKALKQDLALSRDDTMETANDKIHRENVRQGRDKYKTLREIRKGNTKRRVDQFENM.

Residues 11 to 301 (MNVRVTTMDA…GNHELYMRRR (291 aa)) form the FERM domain. Disordered stretches follow at residues 466-518 (TTTP…RTLA) and 539-558 (RDDTMETANDKIHRENVRQG). Over residues 476-485 (EEEEDNEEEL) the composition is skewed to acidic residues. Positions 496 to 518 (DYSKDFDTDEHIKDPVEERRTLA) are enriched in basic and acidic residues. Residue Thr564 is modified to Phosphothreonine.

Interacts with cytoskeletal actin.

It localises to the cell junction. Its subcellular location is the adherens junction. It is found in the cell projection. The protein resides in the microvillus. The protein localises to the rhabdomere. It localises to the cell membrane. Its subcellular location is the cytoplasm. It is found in the cytoskeleton. In terms of biological role, involved in connections of major cytoskeletal structures to the plasma membrane. This Aedes aegypti (Yellowfever mosquito) protein is Moesin/ezrin/radixin homolog 1.